The following is a 370-amino-acid chain: Peptide chain release factor 1 (370 aa).

Glutamine 239 bears the N5-methylglutamine mark.

This sequence belongs to the prokaryotic/mitochondrial release factor family. Post-translationally, methylated by PrmC. Methylation increases the termination efficiency of RF1.

The protein localises to the cytoplasm. Peptide chain release factor 1 directs the termination of translation in response to the peptide chain termination codons UAG and UAA. The polypeptide is Peptide chain release factor 1 (Bacteroides fragilis (strain ATCC 25285 / DSM 2151 / CCUG 4856 / JCM 11019 / LMG 10263 / NCTC 9343 / Onslow / VPI 2553 / EN-2)).